The sequence spans 160 residues: NADH-quinone oxidoreductase subunit I (160 aa).

4Fe-4S ferredoxin-type domains follow at residues arginine 52–glutamate 81 and threonine 91–asparagine 120. Positions 61, 64, 67, 71, 100, 103, 106, and 110 each coordinate [4Fe-4S] cluster.

The protein belongs to the complex I 23 kDa subunit family. As to quaternary structure, NDH-1 is composed of 14 different subunits. Subunits NuoA, H, J, K, L, M, N constitute the membrane sector of the complex. Requires [4Fe-4S] cluster as cofactor.

The protein resides in the cell membrane. The catalysed reaction is a quinone + NADH + 5 H(+)(in) = a quinol + NAD(+) + 4 H(+)(out). In terms of biological role, NDH-1 shuttles electrons from NADH, via FMN and iron-sulfur (Fe-S) centers, to quinones in the respiratory chain. The immediate electron acceptor for the enzyme in this species is believed to be ubiquinone. Couples the redox reaction to proton translocation (for every two electrons transferred, four hydrogen ions are translocated across the cytoplasmic membrane), and thus conserves the redox energy in a proton gradient. The polypeptide is NADH-quinone oxidoreductase subunit I (Wolbachia sp. subsp. Brugia malayi (strain TRS)).